An 804-amino-acid chain; its full sequence is Elongation factor G, mitochondrial (804 aa).

Residues 1–63 (MSMHRVARAV…RHFSQSPIIR (63 aa)) constitute a mitochondrion transit peptide. One can recognise a tr-type G domain in the interval 99-385 (RRVRNIGIAA…AVCDYLPNPA (287 aa)). GTP is bound by residues 108 to 115 (AHIDSGKT), 183 to 187 (DTPGH), and 237 to 240 (NKMD).

Belongs to the TRAFAC class translation factor GTPase superfamily. Classic translation factor GTPase family. EF-G/EF-2 subfamily.

It localises to the mitochondrion. Its pathway is protein biosynthesis; polypeptide chain elongation. Its function is as follows. Mitochondrial GTPase that catalyzes the GTP-dependent ribosomal translocation step during translation elongation. During this step, the ribosome changes from the pre-translocational (PRE) to the post-translocational (POST) state as the newly formed A-site-bound peptidyl-tRNA and P-site-bound deacylated tRNA move to the P and E sites, respectively. Catalyzes the coordinated movement of the two tRNA molecules, the mRNA and conformational changes in the ribosome. The polypeptide is Elongation factor G, mitochondrial (mef1) (Botryotinia fuckeliana (strain B05.10) (Noble rot fungus)).